The chain runs to 389 residues: Putative phosphoserine aminotransferase (389 aa).

Residue Arg45 coordinates L-glutamate. Residues Gly79–Thr80, Trp114, Thr169, Asp191, and Gln214 each bind pyridoxal 5'-phosphate. Lys215 carries the N6-(pyridoxal phosphate)lysine modification. Asn265–Thr266 serves as a coordination point for pyridoxal 5'-phosphate.

Belongs to the class-V pyridoxal-phosphate-dependent aminotransferase family. SerC subfamily. Homodimer. The cofactor is pyridoxal 5'-phosphate.

It catalyses the reaction O-phospho-L-serine + 2-oxoglutarate = 3-phosphooxypyruvate + L-glutamate. The catalysed reaction is 4-(phosphooxy)-L-threonine + 2-oxoglutarate = (R)-3-hydroxy-2-oxo-4-phosphooxybutanoate + L-glutamate. The protein operates within amino-acid biosynthesis; L-serine biosynthesis; L-serine from 3-phospho-D-glycerate: step 2/3. Its pathway is cofactor biosynthesis; pyridoxine 5'-phosphate biosynthesis; pyridoxine 5'-phosphate from D-erythrose 4-phosphate: step 3/5. In terms of biological role, catalyzes the reversible conversion of 3-phosphohydroxypyruvate to phosphoserine and of 3-hydroxy-2-oxo-4-phosphonooxybutanoate to phosphohydroxythreonine. This Schizosaccharomyces pombe (strain 972 / ATCC 24843) (Fission yeast) protein is Putative phosphoserine aminotransferase.